The sequence spans 930 residues: Isoleucine--tRNA ligase (930 aa).

The 'HIGH' region motif lies at Pro-57–His-67. Residue Glu-554 coordinates L-isoleucyl-5'-AMP. The short motif at Lys-595–Ser-599 is the 'KMSKS' region element. Lys-598 lines the ATP pocket. Zn(2+)-binding residues include Cys-888, Cys-891, Cys-908, and Cys-911.

Belongs to the class-I aminoacyl-tRNA synthetase family. IleS type 1 subfamily. Monomer. Zn(2+) is required as a cofactor.

The protein resides in the cytoplasm. The enzyme catalyses tRNA(Ile) + L-isoleucine + ATP = L-isoleucyl-tRNA(Ile) + AMP + diphosphate. In terms of biological role, catalyzes the attachment of isoleucine to tRNA(Ile). As IleRS can inadvertently accommodate and process structurally similar amino acids such as valine, to avoid such errors it has two additional distinct tRNA(Ile)-dependent editing activities. One activity is designated as 'pretransfer' editing and involves the hydrolysis of activated Val-AMP. The other activity is designated 'posttransfer' editing and involves deacylation of mischarged Val-tRNA(Ile). This chain is Isoleucine--tRNA ligase, found in Streptococcus pneumoniae (strain ATCC 700669 / Spain 23F-1).